A 485-amino-acid polypeptide reads, in one-letter code: Glutamyl-tRNA(Gln) amidotransferase subunit A (485 aa).

Catalysis depends on charge relay system residues lysine 79 and serine 154. Serine 178 (acyl-ester intermediate) is an active-site residue.

The protein belongs to the amidase family. GatA subfamily. Heterotrimer of A, B and C subunits.

The catalysed reaction is L-glutamyl-tRNA(Gln) + L-glutamine + ATP + H2O = L-glutaminyl-tRNA(Gln) + L-glutamate + ADP + phosphate + H(+). Functionally, allows the formation of correctly charged Gln-tRNA(Gln) through the transamidation of misacylated Glu-tRNA(Gln) in organisms which lack glutaminyl-tRNA synthetase. The reaction takes place in the presence of glutamine and ATP through an activated gamma-phospho-Glu-tRNA(Gln). The protein is Glutamyl-tRNA(Gln) amidotransferase subunit A of Clostridium botulinum (strain Eklund 17B / Type B).